A 375-amino-acid chain; its full sequence is 4-hydroxy-3-methylbut-2-en-1-yl diphosphate synthase (flavodoxin) (375 aa).

[4Fe-4S] cluster-binding residues include Cys-268, Cys-271, Cys-303, and Glu-310.

This sequence belongs to the IspG family. It depends on [4Fe-4S] cluster as a cofactor.

The enzyme catalyses (2E)-4-hydroxy-3-methylbut-2-enyl diphosphate + oxidized [flavodoxin] + H2O + 2 H(+) = 2-C-methyl-D-erythritol 2,4-cyclic diphosphate + reduced [flavodoxin]. It participates in isoprenoid biosynthesis; isopentenyl diphosphate biosynthesis via DXP pathway; isopentenyl diphosphate from 1-deoxy-D-xylulose 5-phosphate: step 5/6. Its function is as follows. Converts 2C-methyl-D-erythritol 2,4-cyclodiphosphate (ME-2,4cPP) into 1-hydroxy-2-methyl-2-(E)-butenyl 4-diphosphate. This chain is 4-hydroxy-3-methylbut-2-en-1-yl diphosphate synthase (flavodoxin), found in Bacillus velezensis (strain DSM 23117 / BGSC 10A6 / LMG 26770 / FZB42) (Bacillus amyloliquefaciens subsp. plantarum).